A 329-amino-acid chain; its full sequence is Glyceraldehyde-3-phosphate dehydrogenase 1 (329 aa).

NAD(+) contacts are provided by residues 11 to 12 (RI), D33, and K78. D-glyceraldehyde 3-phosphate is bound by residues 148-150 (SCT), T179, 208-209 (TG), and R231. The Nucleophile role is filled by C149. N313 contacts NAD(+).

This sequence belongs to the glyceraldehyde-3-phosphate dehydrogenase family. Homotetramer.

The protein localises to the cytoplasm. The catalysed reaction is D-glyceraldehyde 3-phosphate + phosphate + NAD(+) = (2R)-3-phospho-glyceroyl phosphate + NADH + H(+). The protein operates within carbohydrate degradation; glycolysis; pyruvate from D-glyceraldehyde 3-phosphate: step 1/5. This chain is Glyceraldehyde-3-phosphate dehydrogenase 1 (GAP1), found in Kluyveromyces lactis (strain ATCC 8585 / CBS 2359 / DSM 70799 / NBRC 1267 / NRRL Y-1140 / WM37) (Yeast).